The chain runs to 139 residues: ATP synthase epsilon chain (139 aa).

It belongs to the ATPase epsilon chain family. In terms of assembly, F-type ATPases have 2 components, CF(1) - the catalytic core - and CF(0) - the membrane proton channel. CF(1) has five subunits: alpha(3), beta(3), gamma(1), delta(1), epsilon(1). CF(0) has three main subunits: a, b and c.

It is found in the cell inner membrane. Functionally, produces ATP from ADP in the presence of a proton gradient across the membrane. This chain is ATP synthase epsilon chain, found in Salmonella typhimurium (strain LT2 / SGSC1412 / ATCC 700720).